We begin with the raw amino-acid sequence, 150 residues long: UPF0756 membrane protein NTHI1233 (150 aa).

The next 4 helical transmembrane spans lie at 1 to 21 (MTLQ…LGVL), 52 to 72 (YGVK…LVSG), 81 to 101 (GFLS…AWLA), and 123 to 143 (IIGV…AGIL).

Belongs to the UPF0756 family.

The protein localises to the cell membrane. The chain is UPF0756 membrane protein NTHI1233 from Haemophilus influenzae (strain 86-028NP).